The primary structure comprises 622 residues: Chaperone protein DnaK (622 aa).

Thr197 is modified (phosphothreonine; by autocatalysis). Composition is skewed to basic and acidic residues over residues 515–528 and 575–614; these read LHKEEDRKRKEAVE and ASKEEIESKMKTLSEVSHKLAENMYKKDEKPSDDKKKKDD. Disordered stretches follow at residues 515–537 and 575–622; these read LHKEEDRKRKEAVEARNSADSLV and ASKE…AEVE.

It belongs to the heat shock protein 70 family.

Functionally, acts as a chaperone. The chain is Chaperone protein DnaK from Campylobacter lari (strain RM2100 / D67 / ATCC BAA-1060).